A 430-amino-acid polypeptide reads, in one-letter code: MKLYNLKKKQDQVNFSKAVKLGLGKNQGLFFPKELPILTKEQLYKLLKMDFLTRSSKILSMFIGDEIHYSELTKRIKNAFSFTTPKIVSISKNIACFELFHGPTLAFKDFGARFMAQILSFLNHDKNDTITILTATSGDTGAAVAHAFFKMKNVRVIILYPKGKISELQEKLFCTLGENIITIAVNGSFDECQKLVKQAFNDDQLRIETGLNSANSINISRLLAQICYYFEAFALLTKKQQKNLVISVPCGNFGNLTAGLLAKALGLPIKSFIASTNSNDTVPRFLKTGFWKPNNTVSTISNAMDISQPNNWPRVEELFKRKFWSLKTLKYGSVSDILTKKSLKKLAFLGYVSEPHAAVAYYTLKNKLKQNEFGLFLGTAHPAKFKKTIEKILQITLFLPSKLRNQIKLPLLSHNIRPDFSKLKKFLLEK.

Lys108 is subject to N6-(pyridoxal phosphate)lysine.

The protein belongs to the threonine synthase family. Pyridoxal 5'-phosphate serves as cofactor.

It carries out the reaction O-phospho-L-homoserine + H2O = L-threonine + phosphate. It functions in the pathway amino-acid biosynthesis; L-threonine biosynthesis; L-threonine from L-aspartate: step 5/5. In terms of biological role, catalyzes the gamma-elimination of phosphate from L-phosphohomoserine and the beta-addition of water to produce L-threonine. This Buchnera aphidicola subsp. Baizongia pistaciae (strain Bp) protein is Threonine synthase (thrC).